Consider the following 335-residue polypeptide: MKITRSLSTVEVHTGGEAFRIVTSGLPRAPGDTIVQRRAWLKENADEIRRALMFEPRGHADMYGGYLTEPVSPNADFGVIFVHNEGYSDHCGHGVIALSTAAVELGWVQRTVPETRVGIDAPCGFIEAFVKWDGEHAGPVRFVNVPSFIWQRDVSVETPSFGTVTGDIAYGGAFYFYVDGAPFDLPVREAAVEKLIRFGAEVKAAANAKYPVVHPEIPEINHIYGTIIANAPRHPGSTQANCCVFADREVDRSPTGSGTGGRVAQLYQRGLLAAGDTLVNESIVGTVFKGRVLRETTVGDIPAVIPEVEGSAHICGFANWIVDERDPLTYGFLVR.

The Proton acceptor role is filled by Cys91. Substrate contacts are provided by residues 92 to 93 (GH) and 256 to 257 (GS).

Belongs to the proline racemase family. As to quaternary structure, homodimer.

The enzyme catalyses trans-3-hydroxy-L-proline = 1-pyrroline-2-carboxylate + H2O. Its pathway is amino-acid degradation. Functionally, catalyzes the dehydration of trans-3-hydroxy-L-proline (t3LHyp) to Delta(1)-pyrroline-2-carboxylate (Pyr2C). Together with LhpI, is involved in a t3LHyp degradation pathway to L-proline, which allows A.brasilense to grow on t3LHyp as a sole carbon source. The sequence is that of Trans-3-hydroxy-L-proline dehydratase from Azospirillum brasilense.